We begin with the raw amino-acid sequence, 1123 residues long: Mediator of RNA polymerase II transcription subunit 14 (1123 aa).

The tract at residues K450–Q484 is disordered.

This sequence belongs to the Mediator complex subunit 14 family. In terms of assembly, component of the Mediator complex.

The protein localises to the nucleus. Functionally, component of the Mediator complex, a coactivator involved in the regulated transcription of nearly all RNA polymerase II-dependent genes. Mediator functions as a bridge to convey information from gene-specific regulatory proteins to the basal RNA polymerase II transcription machinery. Mediator is recruited to promoters by direct interactions with regulatory proteins and serves as a scaffold for the assembly of a functional preinitiation complex with RNA polymerase II and the general transcription factors. The sequence is that of Mediator of RNA polymerase II transcription subunit 14 (RGR1) from Debaryomyces hansenii (strain ATCC 36239 / CBS 767 / BCRC 21394 / JCM 1990 / NBRC 0083 / IGC 2968) (Yeast).